Consider the following 294-residue polypeptide: MKKPFNVIAIIGKPRDQQAIQTHRDLYHWLSSLGYQVFIDDRLSAILNDVPEEHFSGLVELGEKADLAIVVGGDGNMLGAARILSRFNTRVIGVNRGNLGFLTDLNPEDFQHSLKAVLDGAYIEEERFLLEAEIHRHGQVKSHNAALNEAVLHPGQVAHMIEFEVYIDESFAFSLRADGLIVSTPTGSTAYSLSGGGPILSPSLNAISLVPMFPHTLSSRPLVVDGNRRIKLLVSPDNRGTQEVSCDGQVSLPVSPGDEIHIYQSPNRLRLIHPKDYSYYHVLRNKLGWSSKLF.

The Proton acceptor role is filled by D74. Residues 74 to 75 (DG), 148 to 149 (NE), H159, R176, D178, 189 to 194 (TAYSLS), and Q249 contribute to the NAD(+) site.

This sequence belongs to the NAD kinase family. A divalent metal cation is required as a cofactor.

It localises to the cytoplasm. The enzyme catalyses NAD(+) + ATP = ADP + NADP(+) + H(+). Involved in the regulation of the intracellular balance of NAD and NADP, and is a key enzyme in the biosynthesis of NADP. Catalyzes specifically the phosphorylation on 2'-hydroxyl of the adenosine moiety of NAD to yield NADP. This is NAD kinase from Vibrio vulnificus (strain YJ016).